The following is a 709-amino-acid chain: Leucine-rich repeat and calponin homology domain-containing protein 1 (709 aa).

Positions 24-37 (LHQHHQHHQHHQHH) are enriched in basic residues. The disordered stretch occupies residues 24–49 (LHQHHQHHQHHQHHGGTGGTGFNLPL). 9 LRR repeats span residues 60 to 83 (AANS…TAPG), 86 to 108 (LSDT…ELCQ), 109 to 131 (FVSL…AIVN), 132 to 155 (LQML…LCGL), 157 to 176 (LKVL…EIGQ), 177 to 199 (LKQL…QIGQ), 200 to 223 (LKSL…LVDL), 225 to 244 (LVKF…CFRE), and 245 to 268 (MKQL…ICTK). 2 stretches are compositionally biased toward basic and acidic residues: residues 301–312 (HQHVEDSKKDSD) and 381–390 (QEREQLAGRA). A disordered region spans residues 301-390 (HQHVEDSKKD…QEREQLAGRA (90 aa)). 3 positions are modified to phosphoserine: serine 395, serine 518, and serine 522. A disordered region spans residues 504-526 (SNGSQYSPNEIRENSPSVSPTAN). Threonine 581 bears the Phosphothreonine mark. The 114-residue stretch at 589-702 (MREEKELVEQ…TTVQALLDVT (114 aa)) folds into the Calponin-homology (CH) domain.

As to quaternary structure, interacts (via LRR repeats) with unphosphorylated DOCK8 (via DHR-2 domain); the interaction prevents the association between DOCK8 and CDC42.

The protein resides in the cytoplasm. Acts as a negative regulator of GTPase CDC42 by sequestering CDC42-guanine exchange factor DOCK8. Probably by preventing CDC42 activation, negatively regulates CD4(+) T-cell migration in response to chemokine stimulation. The chain is Leucine-rich repeat and calponin homology domain-containing protein 1 (Lrch1) from Mus musculus (Mouse).